The chain runs to 879 residues: Alanine--tRNA ligase (879 aa).

Residues His570, His574, Cys672, and His676 each coordinate Zn(2+).

This sequence belongs to the class-II aminoacyl-tRNA synthetase family. The cofactor is Zn(2+).

It is found in the cytoplasm. It carries out the reaction tRNA(Ala) + L-alanine + ATP = L-alanyl-tRNA(Ala) + AMP + diphosphate. In terms of biological role, catalyzes the attachment of alanine to tRNA(Ala) in a two-step reaction: alanine is first activated by ATP to form Ala-AMP and then transferred to the acceptor end of tRNA(Ala). Also edits incorrectly charged Ser-tRNA(Ala) and Gly-tRNA(Ala) via its editing domain. The protein is Alanine--tRNA ligase of Nitratidesulfovibrio vulgaris (strain ATCC 29579 / DSM 644 / CCUG 34227 / NCIMB 8303 / VKM B-1760 / Hildenborough) (Desulfovibrio vulgaris).